The primary structure comprises 404 residues: Serine/threonine transporter SstT (404 aa).

Helical transmembrane passes span 10 to 30 (ILGG…ICLA), 53 to 73 (AIAP…KEVG), 81 to 101 (ILVM…ILSY), 140 to 160 (AITN…GIAL), 177 to 197 (AVSF…FGLV), 215 to 235 (LLAV…PLLV), 287 to 307 (IAIP…ITVL), and 329 to 349 (IVAS…LLLI).

This sequence belongs to the dicarboxylate/amino acid:cation symporter (DAACS) (TC 2.A.23) family.

Its subcellular location is the cell inner membrane. It carries out the reaction L-serine(in) + Na(+)(in) = L-serine(out) + Na(+)(out). It catalyses the reaction L-threonine(in) + Na(+)(in) = L-threonine(out) + Na(+)(out). Its function is as follows. Involved in the import of serine and threonine into the cell, with the concomitant import of sodium (symport system). This chain is Serine/threonine transporter SstT, found in Glaesserella parasuis serovar 5 (strain SH0165) (Haemophilus parasuis).